A 114-amino-acid polypeptide reads, in one-letter code: Large ribosomal subunit protein uL18 (114 aa).

The protein belongs to the universal ribosomal protein uL18 family. As to quaternary structure, part of the 50S ribosomal subunit; part of the 5S rRNA/L5/L18/L25 subcomplex. Contacts the 5S and 23S rRNAs.

Its function is as follows. This is one of the proteins that bind and probably mediate the attachment of the 5S RNA into the large ribosomal subunit, where it forms part of the central protuberance. This chain is Large ribosomal subunit protein uL18, found in Azobacteroides pseudotrichonymphae genomovar. CFP2.